A 358-amino-acid polypeptide reads, in one-letter code: Nicotinate-nucleotide--dimethylbenzimidazole phosphoribosyltransferase (358 aa).

The Proton acceptor role is filled by Glu-314.

It belongs to the CobT family.

The catalysed reaction is 5,6-dimethylbenzimidazole + nicotinate beta-D-ribonucleotide = alpha-ribazole 5'-phosphate + nicotinate + H(+). It participates in nucleoside biosynthesis; alpha-ribazole biosynthesis; alpha-ribazole from 5,6-dimethylbenzimidazole: step 1/2. In terms of biological role, catalyzes the synthesis of alpha-ribazole-5'-phosphate from nicotinate mononucleotide (NAMN) and 5,6-dimethylbenzimidazole (DMB). This Mycobacterium ulcerans (strain Agy99) protein is Nicotinate-nucleotide--dimethylbenzimidazole phosphoribosyltransferase.